A 1482-amino-acid chain; its full sequence is Chromosome partition protein MukB (1482 aa).

34–41 (GGNGAGKS) serves as a coordination point for ATP. Coiled-coil stretches lie at residues 337-468 (LNLV…LSVA), 509-604 (QHLA…APIW), 780-805 (RAAR…ATLS), 835-1044 (EAEI…ELVD), 1070-1115 (TNRA…TAKA), and 1210-1265 (EAIE…LQAV). The flexible hinge stretch occupies residues 666–783 (PGGAEDQRLV…AVPLFGRAAR (118 aa)).

This sequence belongs to the SMC family. MukB subfamily. As to quaternary structure, homodimerization via its hinge domain. Binds to DNA via its C-terminal region. Interacts, and probably forms a ternary complex, with MukE and MukF via its C-terminal region. The complex formation is stimulated by calcium or magnesium. Interacts with tubulin-related protein FtsZ.

The protein resides in the cytoplasm. The protein localises to the nucleoid. Its function is as follows. Plays a central role in chromosome condensation, segregation and cell cycle progression. Functions as a homodimer, which is essential for chromosome partition. Involved in negative DNA supercoiling in vivo, and by this means organize and compact chromosomes. May achieve or facilitate chromosome segregation by condensation DNA from both sides of a centrally located replisome during cell division. The protein is Chromosome partition protein MukB of Serratia proteamaculans (strain 568).